The following is a 260-amino-acid chain: Indole-3-glycerol phosphate synthase (260 aa).

This sequence belongs to the TrpC family.

The catalysed reaction is 1-(2-carboxyphenylamino)-1-deoxy-D-ribulose 5-phosphate + H(+) = (1S,2R)-1-C-(indol-3-yl)glycerol 3-phosphate + CO2 + H2O. It participates in amino-acid biosynthesis; L-tryptophan biosynthesis; L-tryptophan from chorismate: step 4/5. This is Indole-3-glycerol phosphate synthase from Acetivibrio thermocellus (strain ATCC 27405 / DSM 1237 / JCM 9322 / NBRC 103400 / NCIMB 10682 / NRRL B-4536 / VPI 7372) (Clostridium thermocellum).